A 232-amino-acid chain; its full sequence is LexA repressor (232 aa).

A DNA-binding region (H-T-H motif) is located at residues 26–46 (FDEMKDALDLRSKSGIHRLIT). Residues Ser-153 and Lys-191 each act as for autocatalytic cleavage activity in the active site.

The protein belongs to the peptidase S24 family. In terms of assembly, homodimer.

It catalyses the reaction Hydrolysis of Ala-|-Gly bond in repressor LexA.. In terms of biological role, represses a number of genes involved in the response to DNA damage (SOS response), including recA and lexA. In the presence of single-stranded DNA, RecA interacts with LexA causing an autocatalytic cleavage which disrupts the DNA-binding part of LexA, leading to derepression of the SOS regulon and eventually DNA repair. This is LexA repressor from Afipia carboxidovorans (strain ATCC 49405 / DSM 1227 / KCTC 32145 / OM5) (Oligotropha carboxidovorans).